Consider the following 108-residue polypeptide: Peptidyl-prolyl cis-trans isomerase FKBP1B (108 aa).

Positions glycine 20–glutamate 108 constitute a PPIase FKBP-type domain.

This sequence belongs to the FKBP-type PPIase family. FKBP1 subfamily. In terms of assembly, identified in a complex composed of RYR2, FKBP1B, PKA catalytic subunit, PRKAR2A, AKAP6, and the protein phosphatases PP2A and PP1. Interacts directly with RYR2.

The protein resides in the cytoplasm. Its subcellular location is the sarcoplasmic reticulum. The enzyme catalyses [protein]-peptidylproline (omega=180) = [protein]-peptidylproline (omega=0). Its activity is regulated as follows. Inhibited by both FK506 and rapamycin. In terms of biological role, has the potential to contribute to the immunosuppressive and toxic effects of FK506 and rapamycin. PPIases accelerate the folding of proteins. It catalyzes the cis-trans isomerization of proline imidic peptide bonds in oligopeptides. The chain is Peptidyl-prolyl cis-trans isomerase FKBP1B (FKBP1B) from Oryctolagus cuniculus (Rabbit).